A 290-amino-acid polypeptide reads, in one-letter code: Acetyl-coenzyme A carboxylase carboxyl transferase subunit beta (290 aa).

A CoA carboxyltransferase N-terminal domain is found at 27 to 290 (LWHKCPSCEA…FTHSPSPVSA (264 aa)). Zn(2+)-binding residues include Cys-31, Cys-34, Cys-50, and Cys-53. The C4-type zinc-finger motif lies at 31–53 (CPSCEAVLYRPELEKTLDVCPKC).

Belongs to the AccD/PCCB family. As to quaternary structure, acetyl-CoA carboxylase is a heterohexamer composed of biotin carboxyl carrier protein (AccB), biotin carboxylase (AccC) and two subunits each of ACCase subunit alpha (AccA) and ACCase subunit beta (AccD). The cofactor is Zn(2+).

It is found in the cytoplasm. The catalysed reaction is N(6)-carboxybiotinyl-L-lysyl-[protein] + acetyl-CoA = N(6)-biotinyl-L-lysyl-[protein] + malonyl-CoA. Its pathway is lipid metabolism; malonyl-CoA biosynthesis; malonyl-CoA from acetyl-CoA: step 1/1. Its function is as follows. Component of the acetyl coenzyme A carboxylase (ACC) complex. Biotin carboxylase (BC) catalyzes the carboxylation of biotin on its carrier protein (BCCP) and then the CO(2) group is transferred by the transcarboxylase to acetyl-CoA to form malonyl-CoA. The protein is Acetyl-coenzyme A carboxylase carboxyl transferase subunit beta of Pseudomonas aeruginosa (strain UCBPP-PA14).